A 248-amino-acid chain; its full sequence is Ribosomal RNA small subunit methyltransferase A (248 aa).

6 residues coordinate S-adenosyl-L-methionine: His11, Leu13, Gly38, Glu60, Asp83, and Asn101.

This sequence belongs to the class I-like SAM-binding methyltransferase superfamily. rRNA adenine N(6)-methyltransferase family. RsmA subfamily.

The protein localises to the cytoplasm. It carries out the reaction adenosine(1518)/adenosine(1519) in 16S rRNA + 4 S-adenosyl-L-methionine = N(6)-dimethyladenosine(1518)/N(6)-dimethyladenosine(1519) in 16S rRNA + 4 S-adenosyl-L-homocysteine + 4 H(+). Specifically dimethylates two adjacent adenosines (A1518 and A1519) in the loop of a conserved hairpin near the 3'-end of 16S rRNA in the 30S particle. May play a critical role in biogenesis of 30S subunits. The sequence is that of Ribosomal RNA small subunit methyltransferase A from Aquifex aeolicus (strain VF5).